Here is a 351-residue protein sequence, read N- to C-terminus: Phosphoribosylformylglycinamidine cyclo-ligase (351 aa).

This sequence belongs to the AIR synthase family.

Its subcellular location is the cytoplasm. The enzyme catalyses 2-formamido-N(1)-(5-O-phospho-beta-D-ribosyl)acetamidine + ATP = 5-amino-1-(5-phospho-beta-D-ribosyl)imidazole + ADP + phosphate + H(+). The protein operates within purine metabolism; IMP biosynthesis via de novo pathway; 5-amino-1-(5-phospho-D-ribosyl)imidazole from N(2)-formyl-N(1)-(5-phospho-D-ribosyl)glycinamide: step 2/2. The protein is Phosphoribosylformylglycinamidine cyclo-ligase of Idiomarina loihiensis (strain ATCC BAA-735 / DSM 15497 / L2-TR).